A 599-amino-acid chain; its full sequence is Matrix metallopeptidase-21 (599 aa).

The N-terminal stretch at 1-20 (MLTVIRRIFIIQTFIFITAE) is a signal peptide. Positions 21–170 (KIFHSRDHSD…NHEHQAPVRK (150 aa)) are excised as a propeptide. Cys130 serves as a coordination point for Zn(2+). Positions 141–170 (DVTGSNSTRNHIRTSTNTSHNHEHQAPVRK) are disordered. A compositionally biased stretch (polar residues) spans 143 to 159 (TGSNSTRNHIRTSTNTS). His309 contacts Zn(2+). Glu310 is a catalytic residue. 2 residues coordinate Zn(2+): His313 and His319. Cys355 and Cys586 are disulfide-bonded. Hemopexin repeat units lie at residues 356–415 (TGRF…WHGL), 417–473 (SGGV…FPGV), 474–522 (SGPL…FPAI), and 529–585 (VRSL…WFDI). N-linked (GlcNAc...) asparagine glycosylation occurs at Asn398.

This sequence belongs to the peptidase M10A family. Post-translationally, the precursor is cleaved by a furin endopeptidase.

Its function is as follows. Plays a specialized role in the generation of left-right asymmetry during embryogenesis. May act as a negative regulator of the NOTCH-signaling pathway. The sequence is that of Matrix metallopeptidase-21 from Danio rerio (Zebrafish).